The primary structure comprises 150 residues: Transcription antitermination protein NusB (150 aa).

It belongs to the NusB family.

Functionally, involved in transcription antitermination. Required for transcription of ribosomal RNA (rRNA) genes. Binds specifically to the boxA antiterminator sequence of the ribosomal RNA (rrn) operons. In Streptococcus pyogenes serotype M1, this protein is Transcription antitermination protein NusB.